The primary structure comprises 1048 residues: Ceruloplasmin (1048 aa).

Residues 1-19 form the signal peptide; the sequence is MKIFLLCIFLILCGTSVWA. 3 consecutive Plastocyanin-like domains span residues 20-200, 209-357, and 370-554; these read KDKH…LIHC, KEKN…VQDC, and NVRH…MKIC. Positions 55, 64, and 67 each coordinate Na(+). Cu(2+)-binding residues include His120 and His122. His120 is a binding site for O2. Position 128 (Lys128) interacts with Ca(2+). The N-linked (GlcNAc...) asparagine glycan is linked to Asn138. Ca(2+) is bound by residues Gln143, Asp146, and Asp147. The cysteines at positions 174 and 200 are disulfide-linked. Cu(2+)-binding residues include His180 and His182. His180 is an O2 binding site. The N-linked (GlcNAc...) asparagine glycan is linked to Asn227. Ser256 provides a ligand contact to Na(+). Cys276 and Cys357 are disulfide-bonded. Cu(2+)-binding residues include His295, Cys338, and His343. Residues Phe408, Gly417, and Tyr420 each contribute to the Na(+) site. The cysteines at positions 530 and 554 are disulfide-linked. Asn556 and Asn582 each carry an N-linked (GlcNAc...) asparagine glycan. The 149-residue stretch at 564 to 712 folds into the Plastocyanin-like 4 domain; it reads RLKNVDKEFY…MKQKYTVSQC (149 aa). Ser611 serves as a coordination point for Na(+). A disulfide bond links Cys631 and Cys712. 4 residues coordinate Cu(2+): His650, Cys693, His698, and Met703. Cys693 (nucleophile; for glutathione peroxidase activity) is an active-site residue. At Ser716 the chain carries Phosphoserine. Plastocyanin-like domains follow at residues 724–894 and 902–1044; these read GERT…LIVC and SNPI…PNEE. Residue Asn756 is glycosylated (N-linked (GlcNAc...) asparagine). Na(+) contacts are provided by Phe761, Gly770, and Tyr773. Cys868 and Cys894 are joined by a disulfide. The N-linked (GlcNAc...) asparagine glycan is linked to Asn920. A Na(+)-binding site is contributed by Ser949. Cu(2+) is bound by residues His977, His980, His982, His1022, Cys1023, His1024, His1028, and Met1033. 2 residues coordinate O2: His980 and His982. Residue His1024 coordinates O2.

It belongs to the multicopper oxidase family. In terms of assembly, found in a complex with MPO and LTF; interacts directly with MPO and LTF, which allows Fe(3+) incorporation into LTF, activation of CP ferroxidase activity and protection of CP antioxidant properties by MPO. Cu(2+) is required as a cofactor. Expressed by the liver and secreted in plasma. Also expressed in the hypothalamus, spleen and uterus. No expression in the cortex, heart, intestine or kidney.

The protein localises to the secreted. It carries out the reaction 4 Fe(2+) + O2 + 4 H(+) = 4 Fe(3+) + 2 H2O. It catalyses the reaction 4 Cu(+) + O2 + 4 H(+) = 4 Cu(2+) + 2 H2O. The catalysed reaction is a hydroperoxide + 2 glutathione = an alcohol + glutathione disulfide + H2O. The enzyme catalyses 4 nitric oxide + O2 + 2 H2O = 4 nitrite + 4 H(+). It carries out the reaction 2 glutathione + H2O2 = glutathione disulfide + 2 H2O. Functionally, multifunctional blue, copper-binding (6-7 atoms per molecule) glycoprotein. It has ferroxidase activity oxidizing Fe(2+) to Fe(3+) without releasing radical oxygen species. It is involved in iron transport across the cell membrane. Copper ions provide a large number of enzymatic activites. Oxidizes highly toxic ferrous ions to the ferric state for further incorporation onto apo-transferrins, catalyzes Cu(+) oxidation and promotes the oxidation of biogenic amines such as norepinephrin and serotonin. Provides Cu(2+) ions for the ascorbate-mediated deaminase degradation of the heparan sulfate chains of GPC1. Has glutathione peroxidase-like activity, can remove both hydrogen peroxide and lipid hydroperoxide in the presence of thiols. Also shows NO-oxidase and NO2 synthase activities that determine endocrine NO homeostasis. The polypeptide is Ceruloplasmin (CP) (Ovis aries (Sheep)).